The sequence spans 247 residues: Probable transcriptional regulatory protein YebC (247 aa).

The segment at 1 to 20 (MAGHSKWANTRHRKAAQDAK) is disordered.

Belongs to the TACO1 family.

Its subcellular location is the cytoplasm. The sequence is that of Probable transcriptional regulatory protein YebC from Salmonella arizonae (strain ATCC BAA-731 / CDC346-86 / RSK2980).